The primary structure comprises 501 residues: MQDTVTTSALLDPSHSSVSTQDNSSTGGHTSSTSPQLSKPSITPVPAKSRNPHPRANIRRMRRIIAEDPEWSLAIVPLLTELCIQHIIRNFQKNPILKQMLPEHQQKVLNHLSPDLPLAVTANLIDSENYWLRCCMHRWPVCHVAHHGGSWKRMFFERHLENLLKHFIPGTTDPAVILDLLPLCRNYVRRVHVDQFLPPVQLPAQLRPGDQSDSGSEGEMEEPTVDHYQLGDLVAGLSHLEELDLVYDVKDCGMNFEWNLFLFTYRDCLSLAAAIKACHTLKIFKLTRSKVDDDKARIIIRSLLDHPVLEELDLSQNLIGDRGARGAAKLLSHSRLRVLNLANNQVRAPGAQSLAHALAHNTNLISLNLRLNCIEDEGGQALAHALQTNKCLTTLHLGGNELSEPTATLLSQVLAINTTLTSINLSCNHIGLDGGKQLLEGMSDNKTLLEFDLRLSDVAQESEYLIGQALYANREAARQRALNPSHFMSTITANGPENSVG.

Residues 1–23 show a composition bias toward polar residues; it reads MQDTVTTSALLDPSHSSVSTQDN. Disordered stretches follow at residues 1–56 and 202–222; these read MQDT…HPRA and LPAQ…EMEE. The span at 24-34 shows a compositional bias: low complexity; the sequence is SSTGGHTSSTS. 5 LRR repeats span residues 308-321, 335-355, 363-383, 391-411, and 419-439; these read VLEE…LIGD, RLRV…QSLA, NLIS…QALA, CLTT…TLLS, and TLTS…KQLL.

The protein belongs to the DRC5 family. In terms of assembly, component of the nexin-dynein regulatory complex (N-DRC). Interacts with DRC1. Interacts with FBXL13/DRC6, DRC3 and DRC7.

The protein resides in the cell projection. The protein localises to the cilium. It localises to the flagellum. It is found in the cytoplasm. Its subcellular location is the cytoskeleton. The protein resides in the flagellum axoneme. Functionally, component of the nexin-dynein regulatory complex (N-DRC) a key regulator of ciliary/flagellar motility which maintains the alignment and integrity of the distal axoneme and regulates microtubule sliding in motile axonemes. May play a role in the assembly of N-DRC. May be required for sperm motility. The polypeptide is Dynein regulatory complex subunit 5 (TCTE1) (Homo sapiens (Human)).